Consider the following 431-residue polypeptide: Glucose-1-phosphate adenylyltransferase (431 aa).

Residue lysine 39 coordinates beta-D-fructose 1,6-bisphosphate. 3 residues coordinate AMP: arginine 40, histidine 46, and arginine 52. Tyrosine 114 is a binding site for alpha-D-glucose 1-phosphate. AMP is bound at residue arginine 130. Alpha-D-glucose 1-phosphate-binding positions include glycine 179, 194–195 (EK), and serine 212. Residues glutamate 370 and arginine 386 each coordinate AMP. Residues 419-423 (REMLR) and 429-431 (QER) contribute to the beta-D-fructose 1,6-bisphosphate site.

This sequence belongs to the bacterial/plant glucose-1-phosphate adenylyltransferase family. As to quaternary structure, homotetramer.

The catalysed reaction is alpha-D-glucose 1-phosphate + ATP + H(+) = ADP-alpha-D-glucose + diphosphate. Its pathway is glycan biosynthesis; glycogen biosynthesis. Its activity is regulated as follows. Allosterically activated by fructose-1,6-bisphosphate (F16BP) and inhibited by AMP. In terms of biological role, involved in the biosynthesis of ADP-glucose, a building block required for the elongation reactions to produce glycogen. Catalyzes the reaction between ATP and alpha-D-glucose 1-phosphate (G1P) to produce pyrophosphate and ADP-Glc. The protein is Glucose-1-phosphate adenylyltransferase of Salmonella dublin (strain CT_02021853).